The primary structure comprises 114 residues: Ribosome-binding factor A (114 aa).

This sequence belongs to the RbfA family. As to quaternary structure, monomer. Binds 30S ribosomal subunits, but not 50S ribosomal subunits or 70S ribosomes.

The protein resides in the cytoplasm. Its function is as follows. One of several proteins that assist in the late maturation steps of the functional core of the 30S ribosomal subunit. Associates with free 30S ribosomal subunits (but not with 30S subunits that are part of 70S ribosomes or polysomes). Required for efficient processing of 16S rRNA. May interact with the 5'-terminal helix region of 16S rRNA. The protein is Ribosome-binding factor A of Staphylococcus saprophyticus subsp. saprophyticus (strain ATCC 15305 / DSM 20229 / NCIMB 8711 / NCTC 7292 / S-41).